The primary structure comprises 385 residues: Centrosomal protein of 44 kDa (385 aa).

Positions 11-192 (RNLEQVLRSL…GANIPEDTVT (182 aa)) are binds with microtubules and centrioles. Positions 126–154 (LEKTPSQQRKKTSSAKSEPCSSTEKTSTE) are disordered. Residues 139–154 (SAKSEPCSSTEKTSTE) are compositionally biased toward polar residues. The stretch at 230-271 (EVTALQSMLAECQEKLKKLTCIESRLESLEEKMKGKVLVNEK) forms a coiled coil. Residues 303–348 (SEDYSSSSDMDSLNPDRKSKEERHANIPLSSGYSTVSSDSTPRTST) form a disordered region. Residues 305 to 314 (DYSSSSDMDS) show a composition bias toward low complexity. Residues 316–327 (NPDRKSKEERHA) show a composition bias toward basic and acidic residues. Residues 332-342 (SSGYSTVSSDS) show a composition bias toward low complexity. Ser-342 carries the post-translational modification Phosphoserine. Thr-343 carries the post-translational modification Phosphothreonine. Residues 358–381 (SEETTMQKMERMKKMFEETAELLK) are a coiled coil.

In terms of assembly, interacts with CROCC. Interacts with POC1B; the interaction is direct and recruits POC1B to centriolar microtubules. Binds to centriolar microtubules.

It is found in the cytoplasm. The protein resides in the cytoskeleton. It localises to the microtubule organizing center. The protein localises to the centrosome. Its subcellular location is the centriole. It is found in the spindle pole. The protein resides in the midbody. Its function is as follows. Centriole-enriched microtubule-binding protein involved in centriole biogenesis. In collaboration with CEP295 and POC1B, is required for the centriole-to-centrosome conversion by ensuring the formation of bona fide centriole wall. Functions as a linker component that maintains centrosome cohesion. Associates with CROCC and regulates its stability and localization to the centrosome. The polypeptide is Centrosomal protein of 44 kDa (CEP44) (Bos taurus (Bovine)).